Here is a 398-residue protein sequence, read N- to C-terminus: Alpha-2,8-sialyltransferase 8F (398 aa).

Topologically, residues 1 to 3 are cytoplasmic; sequence MRP. Residues 4 to 24 form a helical; Signal-anchor for type II membrane protein membrane-spanning segment; it reads GGALLALLASLLLLLLLRLLW. Residues 25 to 398 lie on the Lumenal side of the membrane; the sequence is CPADAPGRAR…KLQFSKCEVA (374 aa). N66, N93, N151, and N196 each carry an N-linked (GlcNAc...) asparagine glycan. Disulfide bonds link C186–C335 and C200–C395. Substrate contacts are provided by residues N214, 236-238, and 322-324; these read NPS and STG. The active-site Proton donor/acceptor is the H370.

This sequence belongs to the glycosyltransferase 29 family.

The protein resides in the golgi apparatus membrane. The catalysed reaction is a ganglioside GM3 + CMP-N-acetyl-beta-neuraminate = a ganglioside GD3 + CMP + H(+). It catalyses the reaction a ganglioside GM3 (d18:1(4E)) + CMP-N-acetyl-beta-neuraminate = a ganglioside GD3 (d18:1(4E)) + CMP + H(+). It carries out the reaction a ganglioside GD1a (d18:1(4E)) + CMP-N-acetyl-beta-neuraminate = a ganglioside GT1a (d18:1(4E)) + CMP + H(+). The enzyme catalyses a ganglioside GD1a + CMP-N-acetyl-beta-neuraminate = a ganglioside GT1a + CMP + H(+). The catalysed reaction is a ganglioside GM1b (d18:1(4E)) + CMP-N-acetyl-beta-neuraminate = a ganglioside GD1c (d18:1(4E)) + CMP + H(+). It catalyses the reaction a ganglioside GM1b + CMP-N-acetyl-beta-neuraminate = a ganglioside GD1c + CMP + H(+). It carries out the reaction a ganglioside GM4 (d18:1(4E)) + CMP-N-acetyl-beta-neuraminate = an N-acetyl-alpha-neuraminosyl-(2-&gt;8)-N-acetyl-alpha-neuraminosyl-(2-&gt;3)-beta-D-galactosyl-(1&lt;-&gt;1')-N-acylsphing-4-enine + CMP + H(+). The enzyme catalyses N-acetyl-alpha-neuraminosyl-(2-&gt;3)-beta-D-galactosyl-(1&lt;-&gt;1')-ceramide + CMP-N-acetyl-beta-neuraminate = N-acetyl-alpha-neuraminosyl-(2-&gt;8)-N-acetyl-alpha-neuraminosyl-(2-&gt;3)-beta-D-galactosyl-(1&lt;-&gt;1')-ceramide + CMP + H(+). The catalysed reaction is a ganglioside GT1b (d18:1(4E)) + CMP-N-acetyl-beta-neuraminate = a ganglioside GQ1b (d18:1(4E)) + CMP + H(+). It catalyses the reaction a ganglioside GT1b + CMP-N-acetyl-beta-neuraminate = a ganglioside GQ1b + CMP + H(+). The protein operates within protein modification; protein glycosylation. Its function is as follows. Alpha-2,8-sialyltransferase that prefers O-glycans to N-glycans or glycolipids as acceptor substrates. The minimal acceptor substrate is the NeuAc-alpha-2,3(6)-Gal sequence at the non-reducing end of their carbohydrate groups. The chain is Alpha-2,8-sialyltransferase 8F from Homo sapiens (Human).